A 359-amino-acid polypeptide reads, in one-letter code: Photosystem II protein D1 1 (359 aa).

Helical transmembrane passes span 29-46 (YVGW…AATI), 118-133 (HFLI…EWEL), and 142-156 (WICV…AASA). A chlorophyll a-binding site is contributed by histidine 118. Pheophytin a is bound at residue tyrosine 126. 2 residues coordinate [CaMn4O5] cluster: aspartate 170 and glutamate 189. The chain crosses the membrane as a helical span at residues 197-218 (FHMLGVAGVFGGSLFSAMHGSL). Histidine 198 contacts chlorophyll a. A quinone contacts are provided by residues histidine 215 and 264 to 265 (SF). Histidine 215 contacts Fe cation. Fe cation is bound at residue histidine 272. A helical membrane pass occupies residues 274-288 (FLAAWPVVGIWFTAL). Histidine 332, glutamate 333, aspartate 342, and alanine 344 together coordinate [CaMn4O5] cluster. A propeptide spanning residues 345–359 (AAESTPVALQAPAIG) is cleaved from the precursor.

The protein belongs to the reaction center PufL/M/PsbA/D family. PSII is composed of 1 copy each of membrane proteins PsbA, PsbB, PsbC, PsbD, PsbE, PsbF, PsbH, PsbI, PsbJ, PsbK, PsbL, PsbM, PsbT, PsbX, PsbY, PsbZ, Psb30/Ycf12, peripheral proteins PsbO, CyanoQ (PsbQ), PsbU, PsbV and a large number of cofactors. It forms dimeric complexes. It depends on The D1/D2 heterodimer binds P680, chlorophylls that are the primary electron donor of PSII, and subsequent electron acceptors. It shares a non-heme iron and each subunit binds pheophytin, quinone, additional chlorophylls, carotenoids and lipids. D1 provides most of the ligands for the Mn4-Ca-O5 cluster of the oxygen-evolving complex (OEC). There is also a Cl(-1) ion associated with D1 and D2, which is required for oxygen evolution. The PSII complex binds additional chlorophylls, carotenoids and specific lipids. as a cofactor. In terms of processing, tyr-161 forms a radical intermediate that is referred to as redox-active TyrZ, YZ or Y-Z. Post-translationally, C-terminally processed by CtpA; processing is essential to allow assembly of the oxygen-evolving complex and thus photosynthetic growth.

Its subcellular location is the cellular thylakoid membrane. It catalyses the reaction 2 a plastoquinone + 4 hnu + 2 H2O = 2 a plastoquinol + O2. Photosystem II (PSII) is a light-driven water:plastoquinone oxidoreductase that uses light energy to abstract electrons from H(2)O, generating O(2) and a proton gradient subsequently used for ATP formation. It consists of a core antenna complex that captures photons, and an electron transfer chain that converts photonic excitation into a charge separation. The D1/D2 (PsbA/PsbD) reaction center heterodimer binds P680, the primary electron donor of PSII as well as several subsequent electron acceptors. In Parasynechococcus marenigrum (strain WH8102), this protein is Photosystem II protein D1 1.